The following is a 146-amino-acid chain: 3-dehydroquinate dehydratase (146 aa).

Tyr23 (proton acceptor) is an active-site residue. Substrate-binding residues include Asn74, His80, and Asp87. The active-site Proton donor is the His100. Residues 101-102 (IS) and Arg111 contribute to the substrate site.

The protein belongs to the type-II 3-dehydroquinase family. As to quaternary structure, homododecamer.

The catalysed reaction is 3-dehydroquinate = 3-dehydroshikimate + H2O. It functions in the pathway metabolic intermediate biosynthesis; chorismate biosynthesis; chorismate from D-erythrose 4-phosphate and phosphoenolpyruvate: step 3/7. Catalyzes a trans-dehydration via an enolate intermediate. This Bacillus cereus (strain AH820) protein is 3-dehydroquinate dehydratase.